The following is a 76-amino-acid chain: MGNIYTRDIKRIGQQIYELYKDQITTDYEKNKELVKQVVDVYSKKVRNRIAGYITRKAKQASRPVEVTEQQEELEE.

The protein belongs to the eukaryotic ribosomal protein eS17 family.

This chain is Small ribosomal subunit protein eS17, found in Metallosphaera sedula (strain ATCC 51363 / DSM 5348 / JCM 9185 / NBRC 15509 / TH2).